The primary structure comprises 337 residues: tRNA N6-adenosine threonylcarbamoyltransferase (337 aa).

Fe cation-binding residues include His111 and His115. Residues 134-138, Asp167, Gly180, and Asn272 contribute to the substrate site; that span reads LVSGG. Asp300 is a Fe cation binding site.

The protein belongs to the KAE1 / TsaD family. Fe(2+) serves as cofactor.

The protein localises to the cytoplasm. It catalyses the reaction L-threonylcarbamoyladenylate + adenosine(37) in tRNA = N(6)-L-threonylcarbamoyladenosine(37) in tRNA + AMP + H(+). In terms of biological role, required for the formation of a threonylcarbamoyl group on adenosine at position 37 (t(6)A37) in tRNAs that read codons beginning with adenine. Is involved in the transfer of the threonylcarbamoyl moiety of threonylcarbamoyl-AMP (TC-AMP) to the N6 group of A37, together with TsaE and TsaB. TsaD likely plays a direct catalytic role in this reaction. This chain is tRNA N6-adenosine threonylcarbamoyltransferase, found in Cronobacter sakazakii (strain ATCC BAA-894) (Enterobacter sakazakii).